The primary structure comprises 90 residues: Small ribosomal subunit protein bS20 (90 aa).

This sequence belongs to the bacterial ribosomal protein bS20 family.

Functionally, binds directly to 16S ribosomal RNA. The protein is Small ribosomal subunit protein bS20 of Mesomycoplasma hyopneumoniae (strain 232) (Mycoplasma hyopneumoniae).